The sequence spans 186 residues: Potassium-transporting ATPase KdpC subunit (186 aa).

The chain crosses the membrane as a helical span at residues 10–30 (LTIITMVLCGFLFPLAITLIG).

It belongs to the KdpC family. The system is composed of three essential subunits: KdpA, KdpB and KdpC.

It is found in the cell membrane. Functionally, part of the high-affinity ATP-driven potassium transport (or Kdp) system, which catalyzes the hydrolysis of ATP coupled with the electrogenic transport of potassium into the cytoplasm. This subunit acts as a catalytic chaperone that increases the ATP-binding affinity of the ATP-hydrolyzing subunit KdpB by the formation of a transient KdpB/KdpC/ATP ternary complex. This Staphylococcus aureus (strain bovine RF122 / ET3-1) protein is Potassium-transporting ATPase KdpC subunit.